A 360-amino-acid polypeptide reads, in one-letter code: 3-isopropylmalate dehydrogenase (360 aa).

Residue 76–89 (GPKWDKIERDIRPE) participates in NAD(+) binding. Positions 96, 106, 134, and 224 each coordinate substrate. Mg(2+) contacts are provided by Asp224, Asp248, and Asp252. Position 282–294 (282–294 (GSAPDIAGQGIAN)) interacts with NAD(+).

The protein belongs to the isocitrate and isopropylmalate dehydrogenases family. LeuB type 1 subfamily. As to quaternary structure, homodimer. The cofactor is Mg(2+). Mn(2+) is required as a cofactor.

It is found in the cytoplasm. The catalysed reaction is (2R,3S)-3-isopropylmalate + NAD(+) = 4-methyl-2-oxopentanoate + CO2 + NADH. The protein operates within amino-acid biosynthesis; L-leucine biosynthesis; L-leucine from 3-methyl-2-oxobutanoate: step 3/4. In terms of biological role, catalyzes the oxidation of 3-carboxy-2-hydroxy-4-methylpentanoate (3-isopropylmalate) to 3-carboxy-4-methyl-2-oxopentanoate. The product decarboxylates to 4-methyl-2 oxopentanoate. This is 3-isopropylmalate dehydrogenase from Pseudomonas fluorescens (strain ATCC BAA-477 / NRRL B-23932 / Pf-5).